The sequence spans 229 residues: Peptidase E (229 aa).

Catalysis depends on charge relay system residues Ser120, Asp135, and His157.

Belongs to the peptidase S51 family.

It is found in the cytoplasm. The catalysed reaction is Dipeptidase E catalyzes the hydrolysis of dipeptides Asp-|-Xaa. It does not act on peptides with N-terminal Glu, Asn or Gln, nor does it cleave isoaspartyl peptides.. Hydrolyzes dipeptides containing N-terminal aspartate residues. May play a role in allowing the cell to use peptide aspartate to spare carbon otherwise required for the synthesis of the aspartate family of amino acids. This Shigella flexneri serotype 5b (strain 8401) protein is Peptidase E.